The chain runs to 76 residues: Small ribosomal subunit protein bS18 (76 aa).

This sequence belongs to the bacterial ribosomal protein bS18 family. As to quaternary structure, part of the 30S ribosomal subunit. Forms a tight heterodimer with protein bS6.

Binds as a heterodimer with protein bS6 to the central domain of the 16S rRNA, where it helps stabilize the platform of the 30S subunit. The chain is Small ribosomal subunit protein bS18 from Pseudomonas fluorescens (strain ATCC BAA-477 / NRRL B-23932 / Pf-5).